A 101-amino-acid polypeptide reads, in one-letter code: Guanyl-specific ribonuclease Po1 (101 aa).

Position 1 is a pyrrolidone carboxylic acid (glutamine 1). 3 cysteine pairs are disulfide-bonded: cysteine 7–cysteine 84, cysteine 9–cysteine 99, and cysteine 48–cysteine 82. The active site involves histidine 36. The active-site Proton acceptor is the glutamate 54. Histidine 87 serves as the catalytic Proton donor.

The protein belongs to the ribonuclease N1/T1 family.

The catalysed reaction is [RNA] containing guanosine + H2O = an [RNA fragment]-3'-guanosine-3'-phosphate + a 5'-hydroxy-ribonucleotide-3'-[RNA fragment].. Inhibited by divalent cations. Inhibition decreases in the order zinc, lead, cadmium, nickel, mercury. The polypeptide is Guanyl-specific ribonuclease Po1 (Pleurotus ostreatus (Oyster mushroom)).